We begin with the raw amino-acid sequence, 287 residues long: Acetylglutamate kinase (287 aa).

Substrate is bound by residues 70–71 (GG), Arg92, and Asn184.

The protein belongs to the acetylglutamate kinase family. ArgB subfamily.

Its subcellular location is the cytoplasm. It catalyses the reaction N-acetyl-L-glutamate + ATP = N-acetyl-L-glutamyl 5-phosphate + ADP. Its pathway is amino-acid biosynthesis; L-arginine biosynthesis; N(2)-acetyl-L-ornithine from L-glutamate: step 2/4. In terms of biological role, catalyzes the ATP-dependent phosphorylation of N-acetyl-L-glutamate. This chain is Acetylglutamate kinase, found in Roseobacter denitrificans (strain ATCC 33942 / OCh 114) (Erythrobacter sp. (strain OCh 114)).